We begin with the raw amino-acid sequence, 335 residues long: Succinylglutamate desuccinylase (335 aa).

H59, E62, and H151 together coordinate Zn(2+). Residue E215 is part of the active site.

It belongs to the AspA/AstE family. Succinylglutamate desuccinylase subfamily. Requires Zn(2+) as cofactor.

The catalysed reaction is N-succinyl-L-glutamate + H2O = L-glutamate + succinate. It participates in amino-acid degradation; L-arginine degradation via AST pathway; L-glutamate and succinate from L-arginine: step 5/5. Its function is as follows. Transforms N(2)-succinylglutamate into succinate and glutamate. This Pseudomonas putida (strain ATCC 47054 / DSM 6125 / CFBP 8728 / NCIMB 11950 / KT2440) protein is Succinylglutamate desuccinylase.